A 302-amino-acid chain; its full sequence is Sulfate adenylyltransferase subunit 2 (302 aa).

Belongs to the PAPS reductase family. CysD subfamily. In terms of assembly, heterodimer composed of CysD, the smaller subunit, and CysN.

It carries out the reaction sulfate + ATP + H(+) = adenosine 5'-phosphosulfate + diphosphate. It functions in the pathway sulfur metabolism; hydrogen sulfide biosynthesis; sulfite from sulfate: step 1/3. Its function is as follows. With CysN forms the ATP sulfurylase (ATPS) that catalyzes the adenylation of sulfate producing adenosine 5'-phosphosulfate (APS) and diphosphate, the first enzymatic step in sulfur assimilation pathway. APS synthesis involves the formation of a high-energy phosphoric-sulfuric acid anhydride bond driven by GTP hydrolysis by CysN coupled to ATP hydrolysis by CysD. The chain is Sulfate adenylyltransferase subunit 2 from Aeromonas hydrophila subsp. hydrophila (strain ATCC 7966 / DSM 30187 / BCRC 13018 / CCUG 14551 / JCM 1027 / KCTC 2358 / NCIMB 9240 / NCTC 8049).